The sequence spans 239 residues: uncharacterized protein (239 aa).

Residues 129–155 (DSLDDEDDNMISSNDPTKSPEEHDTTT) are disordered. S160 is subject to Phosphoserine.

This is an uncharacterized protein from Schizosaccharomyces pombe (strain 972 / ATCC 24843) (Fission yeast).